The chain runs to 249 residues: O-methyltransferase adaD (249 aa).

Positions 1–15 are enriched in low complexity; that stretch reads MSSVTLTTTTTTTST. Residues 1 to 26 form a disordered region; sequence MSSVTLTTTTTTTSTPPKPTPKDEPQ.

It belongs to the methyltransferase superfamily.

It catalyses the reaction 2-acetyl-3,4a,8,10,11,12a-hexahydroxy-1,4,4a,5,12,12a-hexahydrotetracene-1,12-dione + S-adenosyl-L-methionine = TAN-1612 + S-adenosyl-L-homocysteine + H(+). It functions in the pathway secondary metabolite biosynthesis. Functionally, O-methyltransferase; part of the gene cluster that mediates the biosynthesis of the linear tetracyclic TAN-1612 neuropeptide Y receptor antagonist. The decaketide backbone of TAN-1612 is synthesized by the non-reducing polyketide synthase adaA via condensation of one acetyl-CoA starter unit with 9 malonyl-CoA units. The FAD-dependent monooxygenase adaC then performs hydroxylation at C2 while the polaketide chain is still attached to the NRPKS adaA. The alpha-hydroxylation step at C2 appears to be crucial for the following C18-C1 Claisen cyclization and release of the C9-hydroxyl version of TAN-1612 from the NRPKS adaA, two steps performed by the lactamase-like protein adaB. Finally, the O-methyltransferase adaD performs the C9 O-methylation to complete the biosynthesis of TAN-1612. The sequence is that of O-methyltransferase adaD from Aspergillus niger.